The following is a 224-amino-acid chain: UPF0758 protein CJA_3522 (224 aa).

Residues 102–224 enclose the MPN domain; the sequence is LLSSPHLVRD…LVSLAERGWL (123 aa). Residues H173, H175, and D186 each coordinate Zn(2+). Positions 173–186 match the JAMM motif motif; the sequence is HNHPSGLAEPSQAD.

It belongs to the UPF0758 family.

The protein is UPF0758 protein CJA_3522 of Cellvibrio japonicus (strain Ueda107) (Pseudomonas fluorescens subsp. cellulosa).